The sequence spans 1120 residues: Isoleucine--tRNA ligase (1120 aa).

The 'HIGH' region motif lies at P64–H74. A 'KMSKS' region motif is present at residues K647 to R651. K650 provides a ligand contact to ATP.

It belongs to the class-I aminoacyl-tRNA synthetase family. IleS type 2 subfamily. Monomer. The cofactor is Zn(2+).

The protein localises to the cytoplasm. It carries out the reaction tRNA(Ile) + L-isoleucine + ATP = L-isoleucyl-tRNA(Ile) + AMP + diphosphate. Functionally, catalyzes the attachment of isoleucine to tRNA(Ile). As IleRS can inadvertently accommodate and process structurally similar amino acids such as valine, to avoid such errors it has two additional distinct tRNA(Ile)-dependent editing activities. One activity is designated as 'pretransfer' editing and involves the hydrolysis of activated Val-AMP. The other activity is designated 'posttransfer' editing and involves deacylation of mischarged Val-tRNA(Ile). In Ehrlichia canis (strain Jake), this protein is Isoleucine--tRNA ligase.